The primary structure comprises 533 residues: Tyrosine decarboxylase (533 aa).

Positions 1–22 are disordered; the sequence is MAPPSHCHTINGGAPRNGAIPE. Thr-281 and Asn-336 together coordinate pyridoxal 5'-phosphate. Lys-339 is subject to N6-(pyridoxal phosphate)lysine.

The protein belongs to the group II decarboxylase family. Pyridoxal 5'-phosphate serves as cofactor.

It carries out the reaction L-tyrosine + H(+) = tyramine + CO2. Catalyzes the decarboxylation of L-tyrosine to tyramine, which can be converted to the hydroxycinnamic acid amides feruloyltyramine and 4-coumaroyltyramine. Possesses low tryptophan decarboxylase activity. This Oryza sativa subsp. japonica (Rice) protein is Tyrosine decarboxylase.